The following is a 729-amino-acid chain: Sodium-dependent neutral amino acid transporter B(0)AT2 (729 aa).

Topologically, residues 1–69 (MPKNSKVVKR…ERPAWNSKLQ (69 aa)) are cytoplasmic. 2 positions are modified to phosphoserine: serine 25 and serine 55. The tract at residues 42 to 61 (DVQEEKDTDAEDGSEADDER) is disordered. The span at 43 to 59 (VQEEKDTDAEDGSEADD) shows a compositional bias: acidic residues. 3 consecutive transmembrane segments (helical) span residues 70–90 (YILAQVGFSVGLGNVWRFPYL), 98–117 (AYLLPYLILLLVIGIPLFFL), and 142–162 (GIGFASCVVCYFVALYYNVII). Topologically, residues 163 to 225 (GWTLFYFSQS…SSISDSGGLN (63 aa)) are extracellular. N-linked (GlcNAc...) asparagine glycosylation occurs at asparagine 187. The next 2 helical transmembrane spans lie at 226-244 (WKMTVCLLVAWVMVCLAMI) and 253-270 (IMYFSSLFPYVVLICFLI). Asparagine 276 is a glycosylation site (N-linked (GlcNAc...) asparagine). The next 2 membrane-spanning stretches (helical) occupy residues 306–323 (VFFALGLGFGGVIAFSSY) and 335–356 (VLVSFINFFTSVLATLVVFAVL). The Extracellular segment spans residues 357 to 452 (GFKANIVNEK…FIAFTEAMTH (96 aa)). 2 N-linked (GlcNAc...) asparagine glycosylation sites follow: asparagine 383 and asparagine 394. The next 5 helical transmembrane spans lie at 453–472 (FPASPFWSVMFFLMLINLGL), 496–514 (ILTVICCLLAFCIGLIFVQ), 530–550 (TLPLLIVVILENIAVSFVYGI), 571–592 (YMWKYISPLMLLTLLIASIVNM), and 620–642 (VVCFSLMVLAILPVPVVFIIRRC). The Cytoplasmic segment spans residues 643–729 (NLIDDSSGNL…DMPDMPESDL (87 aa)). Serine 687, serine 699, and serine 701 each carry phosphoserine.

Belongs to the sodium:neurotransmitter symporter (SNF) (TC 2.A.22) family. SLC6A15 subfamily. In terms of tissue distribution, significant expressed in brain, lung and kidney. In brain, mainly expressed int the cortex, the cerebellum and the brain stem.

The protein resides in the membrane. The catalysed reaction is L-pipecolate(in) + Na(+)(in) = L-pipecolate(out) + Na(+)(out). It catalyses the reaction L-leucine(in) + Na(+)(in) = L-leucine(out) + Na(+)(out). It carries out the reaction L-isoleucine(in) + Na(+)(in) = L-isoleucine(out) + Na(+)(out). The enzyme catalyses L-methionine(in) + Na(+)(in) = L-methionine(out) + Na(+)(out). The catalysed reaction is L-proline(in) + Na(+)(in) = L-proline(out) + Na(+)(out). It catalyses the reaction L-alanine(in) + Na(+)(in) = L-alanine(out) + Na(+)(out). It carries out the reaction L-asparagine(in) + Na(+)(in) = L-asparagine(out) + Na(+)(out). The enzyme catalyses L-valine(in) + Na(+)(in) = L-valine(out) + Na(+)(out). The catalysed reaction is L-cysteine(in) + Na(+)(in) = L-cysteine(out) + Na(+)(out). It catalyses the reaction L-glutamine(in) + Na(+)(in) = L-glutamine(out) + Na(+)(out). It carries out the reaction L-serine(in) + Na(+)(in) = L-serine(out) + Na(+)(out). The enzyme catalyses L-threonine(in) + Na(+)(in) = L-threonine(out) + Na(+)(out). The catalysed reaction is L-phenylalanine(in) + Na(+)(in) = L-phenylalanine(out) + Na(+)(out). Functions as a sodium-dependent neutral amino acid transporter. Exhibits preference for methionine and for the branched-chain amino acids, particularly leucine, valine and isoleucine. Can also transport low-affinity substrates such as alanine, phenylalanine, glutamine and pipecolic acid. Mediates the saturable, pH-sensitive and electrogenic cotransport of proline and sodium ions with a stoichiometry of 1:1. May have a role as transporter for neurotransmitter precursors into neurons. In contrast to other members of the neurotransmitter transporter family, does not appear to be chloride-dependent. The sequence is that of Sodium-dependent neutral amino acid transporter B(0)AT2 (Slc6a15) from Mus musculus (Mouse).